A 667-amino-acid polypeptide reads, in one-letter code: Beta-galactosidase LacZ (667 aa).

R109 is a substrate binding site. Residue C113 participates in Zn(2+) binding. N147 is a binding site for substrate. The active-site Proton donor is E148. Zn(2+) contacts are provided by C153, C155, and C158. The active-site Nucleophile is E307. Residues W315 and 355-358 (EKFH) each bind substrate.

Belongs to the glycosyl hydrolase 42 family.

The catalysed reaction is Hydrolysis of terminal non-reducing beta-D-galactose residues in beta-D-galactosides.. Functionally, catalyzes the hydrolysis of lactose to its constituent monosaccharides glucose and galactose. The chain is Beta-galactosidase LacZ from Lactobacillus acidophilus (strain ATCC 700396 / NCK56 / N2 / NCFM).